A 436-amino-acid chain; its full sequence is Probable cinnamyl alcohol dehydrogenase 8B (436 aa).

Residue cysteine 120 participates in Zn(2+) binding. Threonine 122 contacts NADP(+). Histidine 142, glutamate 143, cysteine 173, cysteine 176, cysteine 179, cysteine 187, and cysteine 236 together coordinate Zn(2+). NADP(+) contacts are provided by residues threonine 240, glycine 261–glycine 266, serine 284–lysine 289, threonine 324, glycine 348, and asparagine 371–valine 373.

This sequence belongs to the zinc-containing alcohol dehydrogenase family. Homodimer. Zn(2+) serves as cofactor.

The catalysed reaction is (E)-cinnamyl alcohol + NADP(+) = (E)-cinnamaldehyde + NADPH + H(+). The enzyme catalyses (E)-coniferol + NADP(+) = (E)-coniferaldehyde + NADPH + H(+). It carries out the reaction (E)-sinapyl alcohol + NADP(+) = (E)-sinapaldehyde + NADPH + H(+). It catalyses the reaction (E)-4-coumaroyl alcohol + NADP(+) = (E)-4-coumaraldehyde + NADPH + H(+). The catalysed reaction is (E)-caffeyl alcohol + NADP(+) = (E)-caffeyl aldehyde + NADPH + H(+). Its pathway is aromatic compound metabolism; phenylpropanoid biosynthesis. Involved in lignin biosynthesis. Catalyzes the final step specific for the production of lignin monomers. Catalyzes the NADPH-dependent reduction of coniferaldehyde, 5-hydroxyconiferaldehyde, sinapaldehyde, 4-coumaraldehyde and caffeyl aldehyde to their respective alcohols. In Oryza sativa subsp. japonica (Rice), this protein is Probable cinnamyl alcohol dehydrogenase 8B.